The following is a 976-amino-acid chain: uncharacterized protein (976 aa).

This is an uncharacterized protein from Acanthamoeba polyphaga (Amoeba).